The sequence spans 434 residues: Protein phosphatase 2C 56 (434 aa).

In terms of domain architecture, PPM-type phosphatase spans 128 to 422; it reads LYGFTSICGR…DNISVVVVDL (295 aa). Positions 177, 261, 262, 347, and 413 each coordinate Mg(2+). Residues 423-427 carry the Nuclear localization signal motif; the sequence is KPRRK.

This sequence belongs to the PP2C family. Interacts with SPK1, ATHB-6, CIPK15/PKS3, GPX3, SRK2E/OST1, SRK2D, SRK2I, SCAR1, SCAR2, SCAR3 and SCARL. Binds to the PA released by the phospholipase D alpha 1 (PLDALPHA1) in response to ABA during the stomatal closure regulation. Interacts with ABA-bounded PYR1, PYL1, PYL2, PYL3, PYL4, PYL5, PYL6, PYL7, PYL8, PYL9, PYL10, and with free PYL2, PYL3, PYL4 and PYL13. Binds to RPL12B, CPK21 and CPK23. Binds to MAPKKK18. Interacts with KIN10. Interacts with phosphorylated PYL8/RCAR3. Mg(2+) serves as cofactor. The cofactor is Mn(2+). As to expression, expressed in seeds and seedlings. In roots, confined to lateral root caps and columella cells.

Its subcellular location is the nucleus. It is found in the cytoplasm. It localises to the cell membrane. It carries out the reaction O-phospho-L-seryl-[protein] + H2O = L-seryl-[protein] + phosphate. The catalysed reaction is O-phospho-L-threonyl-[protein] + H2O = L-threonyl-[protein] + phosphate. Its activity is regulated as follows. Phosphatase activity repressed by oxidized GPX3 and phosphatidic acid (PA). PA is produced by PLD alpha 1 in response to ABA. Repressed by PYR/PYL/RCAR ABA receptors in an ABA-dependent manner. Key component and repressor of the abscisic acid (ABA) signaling pathway that regulates numerous ABA responses, such as stomatal closure, osmotic water permeability of the plasma membrane (Pos), drought-induced resistance and rhizogenesis, response to glucose, high light stress, seed germination and inhibition of vegetative growth. During the stomatal closure regulation, modulates the inward calcium-channel permeability as well as the actin reorganization in guard cells in response to ABA. Involved in the resistance to the bacterial pathogen Pseudomonas syringae pv. tomato. Controls negatively fibrillin expression that is involved in mediating ABA-induced photoprotection. May be involved in ABA content regulation. Plays a role in the Pro accumulation in response to reduced water availability (low water potential). Required for the ABA negative regulation of the ethylene-induced hyponastic growth. Involved in acquired thermotolerance of root growth and seedling survival. Activates/represses SRK2E/OST1 in response to ABA-dependent stimuli, especially in stomata closure regulation involving SLAC1. Represses MAPKKK18 activity and promotes MAPKKK18 degradation by the proteasome pathway upon abscisic acid (ABA) treatment. Represses KIN10 activity by the specific dephosphorylation of its T-loop Thr-198, leading to a poststress inactivation of SnRK1 signaling. Restricts MAPKKK20 activity by dephosphorylation. In Arabidopsis thaliana (Mouse-ear cress), this protein is Protein phosphatase 2C 56.